A 414-amino-acid polypeptide reads, in one-letter code: L-cysteine:1D-myo-inositol 2-amino-2-deoxy-alpha-D-glucopyranoside ligase (414 aa).

Residue C44 participates in Zn(2+) binding. L-cysteinyl-5'-AMP contacts are provided by residues 44 to 47, T59, and 82 to 84; these read CGIT and NIT. The short motif at 46 to 56 is the 'HIGH' region element; sequence ITPYDSTHLGH. The 'ERGGDP' region motif lies at 188 to 193; the sequence is ERGGDP. Residue W228 participates in L-cysteinyl-5'-AMP binding. Zn(2+) is bound at residue C232. 250–252 provides a ligand contact to L-cysteinyl-5'-AMP; it reads GSD. A Zn(2+)-binding site is contributed by H257. I284 lines the L-cysteinyl-5'-AMP pocket. Positions 290–294 match the 'KMSKS' region motif; the sequence is KMSKS.

This sequence belongs to the class-I aminoacyl-tRNA synthetase family. MshC subfamily. Monomer. Zn(2+) is required as a cofactor.

The enzyme catalyses 1D-myo-inositol 2-amino-2-deoxy-alpha-D-glucopyranoside + L-cysteine + ATP = 1D-myo-inositol 2-(L-cysteinylamino)-2-deoxy-alpha-D-glucopyranoside + AMP + diphosphate + H(+). Functionally, catalyzes the ATP-dependent condensation of GlcN-Ins and L-cysteine to form L-Cys-GlcN-Ins. The polypeptide is L-cysteine:1D-myo-inositol 2-amino-2-deoxy-alpha-D-glucopyranoside ligase (Corynebacterium aurimucosum (strain ATCC 700975 / DSM 44827 / CIP 107346 / CN-1) (Corynebacterium nigricans)).